The primary structure comprises 413 residues: Probable tRNA pseudouridine synthase D (413 aa).

The Nucleophile role is filled by D97. The TRUD domain occupies 167 to 370; it reads AAPNYYGYQR…YGTYRRVRLE (204 aa).

Belongs to the pseudouridine synthase TruD family.

It carries out the reaction uridine(13) in tRNA = pseudouridine(13) in tRNA. Its function is as follows. Could be responsible for synthesis of pseudouridine from uracil-13 in transfer RNAs. The protein is Probable tRNA pseudouridine synthase D of Pyrobaculum aerophilum (strain ATCC 51768 / DSM 7523 / JCM 9630 / CIP 104966 / NBRC 100827 / IM2).